We begin with the raw amino-acid sequence, 128 residues long: Fluoride-specific ion channel FluC 2 (128 aa).

4 helical membrane passes run 13–35 (ALVAVGGAVGAVLRYTVAQAIAG), 40–59 (LAANAAGSLALGALAYEAAA), 71–93 (LLGTGCLSAFTTYSTFAVQTAGL), and 97–119 (WMAANVATTYALGFAGVLVGRAI).

It belongs to the fluoride channel Fluc/FEX (TC 1.A.43) family.

Its subcellular location is the cell membrane. It carries out the reaction fluoride(in) = fluoride(out). Functionally, fluoride-specific ion channel. Important for reducing fluoride concentration in the cell, thus reducing its toxicity. The chain is Fluoride-specific ion channel FluC 2 from Halobacterium salinarum (strain ATCC 700922 / JCM 11081 / NRC-1) (Halobacterium halobium).